Reading from the N-terminus, the 133-residue chain is Small ribosomal subunit protein uS8c (133 aa).

The protein belongs to the universal ribosomal protein uS8 family. In terms of assembly, part of the 30S ribosomal subunit.

It is found in the plastid. Its subcellular location is the chloroplast. Functionally, one of the primary rRNA binding proteins, it binds directly to 16S rRNA central domain where it helps coordinate assembly of the platform of the 30S subunit. This Chlorokybus atmophyticus (Soil alga) protein is Small ribosomal subunit protein uS8c (rps8).